The sequence spans 226 residues: Pathogenesis-related protein R minor form (226 aa).

The first 25 residues, 1–25 (MNFLKSFPFYAFLCFGQYFVAVTHA), serve as a signal peptide directing secretion. 8 disulfide bridges follow: C34–C225, C75–C85, C90–C96, C140–C214, C145–C197, C153–C163, C167–C176, and C177–C184.

This sequence belongs to the thaumatin family.

It localises to the vacuole. This chain is Pathogenesis-related protein R minor form, found in Nicotiana tabacum (Common tobacco).